A 205-amino-acid chain; its full sequence is Ribonuclease HII (205 aa).

The RNase H type-2 domain maps to 15–205 (SQVCGIDEAG…SFKLRKLGEK (191 aa)). 3 residues coordinate a divalent metal cation: Asp21, Glu22, and Asp117.

The protein belongs to the RNase HII family. The cofactor is Mn(2+). Mg(2+) serves as cofactor.

It is found in the cytoplasm. It carries out the reaction Endonucleolytic cleavage to 5'-phosphomonoester.. Endonuclease that specifically degrades the RNA of RNA-DNA hybrids. In Chlorobaculum tepidum (strain ATCC 49652 / DSM 12025 / NBRC 103806 / TLS) (Chlorobium tepidum), this protein is Ribonuclease HII.